Reading from the N-terminus, the 543-residue chain is Tapetal oleosin GRP-17 (543 aa).

Positions Met1–Lys67 are polar. 3 helical membrane passes run Ile68–Gly88, Pro98–Ala118, and Thr119–Val139. Positions Ile68–Ala162 are hydrophobic. 2 disordered regions span residues Lys148 to Ser169 and Gly195 to Glu543. Residues Ser201–Gly212 show a composition bias toward gly residues. 3 repeat units span residues Gly220–Ser223, Gly227–Gly230, and Gly234–Gly237. Low complexity predominate over residues Gly220 to Ser229. The interval Gly220–Gly514 is 29 X 4 AA approximate tandem repeats of G-M-S-G. Residues Gly230 to Gly240 show a composition bias toward gly residues. The span at Lys244–Lys256 shows a compositional bias: basic residues. Repeat copies occupy residues Gly259–Gly262, Gly269–Gly272, Gly276–Gly279, Gly301–Gly304, Gly305–Gly308, Gly312–Gly315, Gly319–Ser322, Ser344–Gly347, Gly348–Gly351, Gly355–Gly358, Gly362–Gly365, Cys387–Gly390, Gly391–Gly394, Gly398–Arg401, Gly405–Gly408, Gly410–Gly413, Gly414–Ser417, Gly438–Gly441, Gly445–Gly448, Gly458–Ser461, Gly464–Gly467, Gly468–Ser471, Gly492–Gly495, Gly499–Gly502, Gly506–Glu509, and Gly511–Gly514. A compositionally biased stretch (gly residues) spans Gly272–Ser283. Positions Ser285 to Gly301 are enriched in basic residues. A compositionally biased stretch (gly residues) spans Gly315–Ser326. A compositionally biased stretch (basic residues) spans Ser328–Ser344. The span at Met345 to Ser357 shows a compositional bias: low complexity. Positions Gly358–Lys370 are enriched in gly residues. Positions Ser371 to Cys387 are enriched in basic residues. 2 stretches are compositionally biased toward gly residues: residues Gly405–Gly416 and Ser440–Gly470. Residues Ser471–Gly492 are compositionally biased toward basic residues. Over residues Gly495–Gly505 the composition is skewed to gly residues. The span at Gly518–Gly531 shows a compositional bias: basic residues. The segment covering Gly532 to Glu543 has biased composition (gly residues).

It belongs to the oleosin family. Proteolytically cleaved following anther tapetal breakdown. Flower specific, especially in anther tapetum, pollen (at protein level) and flowers florets.

The protein localises to the secreted. It is found in the extracellular space. The protein resides in the extracellular matrix. Its subcellular location is the pollen coat. It localises to the lipid droplet. The protein localises to the membrane. Functionally, lipid-binding oleosin pollen coat protein required to mediate pollen recognition by stigma cells and subsequent pollen hydration. Involved in anther tapetum development, especially for the physiology of tapetosomes. Also implicated in the formation of pollen coat. In Arabidopsis thaliana (Mouse-ear cress), this protein is Tapetal oleosin GRP-17.